A 248-amino-acid chain; its full sequence is NLP effector protein Pc121494 (248 aa).

The first 19 residues, 1–19 (MKFIAVLIAAIASLSAVQA), serve as a signal peptide directing secretion. The short motif at 124–130 (GHRNGWE) is the Hepta-peptide GHRHDWE motif element. An N-linked (GlcNAc...) asparagine glycan is attached at Asn143.

It belongs to the Necrosis inducing protein (NPP1) family.

It localises to the secreted. Its function is as follows. Secreted effector that contributes strongly to virulence during infection by P.capsici. This is NLP effector protein Pc121494 from Phytophthora capsici.